Reading from the N-terminus, the 379-residue chain is Alanine racemase (379 aa).

Catalysis depends on lysine 37, which acts as the Proton acceptor; specific for D-alanine. N6-(pyridoxal phosphate)lysine is present on lysine 37. Residue arginine 137 coordinates substrate. The active-site Proton acceptor; specific for L-alanine is the tyrosine 269. Methionine 317 is a binding site for substrate.

Belongs to the alanine racemase family. Pyridoxal 5'-phosphate is required as a cofactor.

It catalyses the reaction L-alanine = D-alanine. It participates in amino-acid biosynthesis; D-alanine biosynthesis; D-alanine from L-alanine: step 1/1. Functionally, catalyzes the interconversion of L-alanine and D-alanine. May also act on other amino acids. This Geobacter sp. (strain M21) protein is Alanine racemase (alr).